The following is a 428-amino-acid chain: MLDIRLFRNEPEKVKSKIELRGDDPKVVDQVLELDEQRRELISKTEEMKAKRNKVSEEIAQKKRNKEDADDVIAEMRHLGDEIKDIDNQLNEVDNKIRDILIRIPNLINEDVPQGASDEENVEVKKWGTPRDFEFEPKAHWDLVEELKMADFERAAKVSGARFVYLTKDGALLERALMNYMLTKHTTQHGYTEMMTPQLVNADTMFGTGQLPKFEEDLFKVEKEGLYTIPTAEVPLTNFYRDEIIQPGVLPELFTAQTACFRSEAGSAGRDTRGLIRLHQFDKVEMVRIVQPEDSWDALEEMTQNAEAILEELGLPYRRVILCTGDIGFSASKTYDLEVWLPSYNDYKEISSCSNCTDFQARRANIRFKRDAASKPELVHTLNGSGLAVGRTFAAIVENYQNEDGTLTIPEALVPFMGGKTKIEKPIK.

231–233 (TAE) lines the L-serine pocket. 262–264 (RSE) provides a ligand contact to ATP. Glu-285 contacts L-serine. An ATP-binding site is contributed by 349–352 (EISS). Ser-385 serves as a coordination point for L-serine.

It belongs to the class-II aminoacyl-tRNA synthetase family. Type-1 seryl-tRNA synthetase subfamily. In terms of assembly, homodimer. The tRNA molecule binds across the dimer.

Its subcellular location is the cytoplasm. It catalyses the reaction tRNA(Ser) + L-serine + ATP = L-seryl-tRNA(Ser) + AMP + diphosphate + H(+). The enzyme catalyses tRNA(Sec) + L-serine + ATP = L-seryl-tRNA(Sec) + AMP + diphosphate + H(+). It participates in aminoacyl-tRNA biosynthesis; selenocysteinyl-tRNA(Sec) biosynthesis; L-seryl-tRNA(Sec) from L-serine and tRNA(Sec): step 1/1. In terms of biological role, catalyzes the attachment of serine to tRNA(Ser). Is also able to aminoacylate tRNA(Sec) with serine, to form the misacylated tRNA L-seryl-tRNA(Sec), which will be further converted into selenocysteinyl-tRNA(Sec). In Staphylococcus epidermidis (strain ATCC 35984 / DSM 28319 / BCRC 17069 / CCUG 31568 / BM 3577 / RP62A), this protein is Serine--tRNA ligase.